The chain runs to 310 residues: 4-hydroxythreonine-4-phosphate dehydrogenase (310 aa).

The substrate site is built by His126 and Thr127. Residues His156, His195, and His251 each coordinate a divalent metal cation. Lys259, Asn268, and Arg277 together coordinate substrate.

Belongs to the PdxA family. As to quaternary structure, homodimer. Requires Zn(2+) as cofactor. It depends on Mg(2+) as a cofactor. Co(2+) is required as a cofactor.

The protein resides in the cytoplasm. It catalyses the reaction 4-(phosphooxy)-L-threonine + NAD(+) = 3-amino-2-oxopropyl phosphate + CO2 + NADH. Its pathway is cofactor biosynthesis; pyridoxine 5'-phosphate biosynthesis; pyridoxine 5'-phosphate from D-erythrose 4-phosphate: step 4/5. Catalyzes the NAD(P)-dependent oxidation of 4-(phosphooxy)-L-threonine (HTP) into 2-amino-3-oxo-4-(phosphooxy)butyric acid which spontaneously decarboxylates to form 3-amino-2-oxopropyl phosphate (AHAP). In Helicobacter acinonychis (strain Sheeba), this protein is 4-hydroxythreonine-4-phosphate dehydrogenase.